An 844-amino-acid chain; its full sequence is MQDISNHTPMIQQYLKIKSQYQDILLFYRMGDFYELFFDDAKKAAELLDITLTARGKSNGESIPMAGVPYHAAEAYIAKIVKKGLSIAICEQTGDPNTSKGPVERQVTRIITPATVSEEAFLDNNQDSILVSIFEKNNKYYLAYTSYTQGKIYLVKTLTSLNELKNTVLKLSPQEIITNSRELAQQNPFKKPIKALEEWYYSNFEAKKYINDSLDTNIANNILNLYKNDQLTTIGSILSYLTNILKDTPRHITDISYEQEQDTLNIDINSRINLELDNNSKSSLLSIIGKCKTSLGSRLLKRYFSNPTRNLNILATRHSIINSLGENQHFLKIQDVLSYISDIERIISRVALGTVKPKDLVALRYSLEQLPILKKLLSEKNTPEITNINNRIHQLDELVTLLDKAIIENPPTTIRDGGVIKEGFDKELDELKSIKDNSYDFLIKFEELQKQKIGISTLKVGYNRVHGYYIELSKQHADKIPTEYVRRQTLKASERYITEELKNFEDKVLSSKEKALAREKLIYDTLLKKVIEYYKQIQETAASIAEIDVLANFAERAIKLKLSQPKFNNLAKLELKEVRHLAIEHNIDEPFIPNDTLLSKDTNTLQIITGPNMGGKSTYMRQVAQLIFLAYIGSFVPASYADICDIDTIYTRIGASDDISSGRSTFMVEMTETAYILNNASAKSLVIMDEIGRGTSTFDGLALAKACAEKFAQMGAFTLFATHYFELTELAKQYPNVCNIHFEAKEYKDNIYFMHKAVTGAAKKSYGIQVAKLAGISQDVLESAKQNLYNLEKKQQLTESTQVQAQFQLEPTTQNPLQQKLDAIDINTITPLEALNILFELKKR.

An ATP-binding site is contributed by 610-617 (GPNMGGKS).

The protein belongs to the DNA mismatch repair MutS family.

In terms of biological role, this protein is involved in the repair of mismatches in DNA. It is possible that it carries out the mismatch recognition step. This protein has a weak ATPase activity. The protein is DNA mismatch repair protein MutS of Francisella tularensis subsp. holarctica (strain FTNF002-00 / FTA).